The chain runs to 201 residues: Cell division protein SepF (201 aa).

Residues 27-38 (VQERTSVQRDSR) show a composition bias toward basic and acidic residues. A disordered region spans residues 27 to 99 (VQERTSVQRD…PRVQNKDSVR (73 aa)). Residues 43 to 54 (QEASQRSHMTNS) show a composition bias toward polar residues. A compositionally biased stretch (basic and acidic residues) spans 72-81 (NRQERQRVQR). Polar residues predominate over residues 83-92 (NAYQQATPRV).

Belongs to the SepF family. As to quaternary structure, homodimer. Interacts with FtsZ.

It localises to the cytoplasm. In terms of biological role, cell division protein that is part of the divisome complex and is recruited early to the Z-ring. Probably stimulates Z-ring formation, perhaps through the cross-linking of FtsZ protofilaments. Its function overlaps with FtsA. This Streptococcus agalactiae serotype Ia (strain ATCC 27591 / A909 / CDC SS700) protein is Cell division protein SepF.